A 304-amino-acid polypeptide reads, in one-letter code: Bifunctional protein FolD 3 (304 aa).

NADP(+) contacts are provided by residues G172–S174, S197, and I238.

It belongs to the tetrahydrofolate dehydrogenase/cyclohydrolase family. Homodimer.

It carries out the reaction (6R)-5,10-methylene-5,6,7,8-tetrahydrofolate + NADP(+) = (6R)-5,10-methenyltetrahydrofolate + NADPH. The enzyme catalyses (6R)-5,10-methenyltetrahydrofolate + H2O = (6R)-10-formyltetrahydrofolate + H(+). The protein operates within one-carbon metabolism; tetrahydrofolate interconversion. Functionally, catalyzes the oxidation of 5,10-methylenetetrahydrofolate to 5,10-methenyltetrahydrofolate and then the hydrolysis of 5,10-methenyltetrahydrofolate to 10-formyltetrahydrofolate. The chain is Bifunctional protein FolD 3 from Rhizorhabdus wittichii (strain DSM 6014 / CCUG 31198 / JCM 15750 / NBRC 105917 / EY 4224 / RW1) (Sphingomonas wittichii).